The sequence spans 2130 residues: MAERRAFAQKISRTVAAEVRKQISGQYSGSPQLLKNLNIVGNISHHTTVPLTEAVDPVDLEDYLVTHPLSGDSGPLRDLVEFPPDDIEVVYSPRDCRTLVSAVPEESEMDPHVRDCIRSYTEDWAVVVRKYHKLGTGFNPNTLDKQKERQKGLPRQVFESDEAPDGSSYQDEQDDLKRRSMSIDDTPRGSWACSIFDLKNSLPDALLPNLLDRTPNEEIDHQNDDQRKSNRHKELFALHPSPDEEEPIERLSVPDVPKEHFGQRLLVKCLSLKFEIEIEPIFASLALYDVKEKKKISENFYFDLNSEQMKGLLRPHVPPAAITTLARSAIFSITYPSQDVFLVIKLEKVLQQGDIGECAEPYMIFKEADATKNKEKLEKLKSQADQFCQRLGKYRMPFAWTAIHLMNIVSSAGSLERDSTEVEISTGERKGSWSERRNSSLVGRRSLERTTSGDDACNLTSFRPATLTVANFFKQEGDRLSDEDLYKFLADMRRPSSVLRRLRPITAQLKIDISPAPENPHYCLTPELLQVKLYPDSRVRPTREILEFPARDVYVPNTTYRNLLYIYPQSLNFANRQGSARNITVKVQFMYGEDPSNAMPVIFGKSSCSEFSKEAYTAVVYHNRSPDFHEEIKVKLPATLTDHHHLLFTFYHVSCQQKQNTPLETPVGYTWIPMLQNGRLKTGQFCLPVSLEKPPQAYSVLSPEVPLPGMKWVDNHKGVFNVEVVAVSSIHTQDPYLDKFFALVNALDEHMFPVRIGDMRIMENNLESELKSSISALNSSQLEPVVRFLHLLLDKLILLVVRPPVIAGQIVNLGQASFEAMASIINRLHKNLEGNHDQHGRNNLLASYIYYVFRLPNTYPNSPSPGPGGLGGSVHYATMARSAVRPASLNLNRSRSLSNSNPDISGTPTSPDDEVRSIIGSKGLDRSNSWVNTGPKAAPWGSNPSPSAESTQAMDRSCNRMSSHTETSSFLQTLTGRLPTKKLFHEELALQWVVCSGSVRESALQQAWFFFELMVKSMVHHLYFNDKLDAPRESRFPERFMDDIAALVSTIAGDVVSRFQKDTEMVERLNTSLAFFLNDLLSVMDRGFVFSLIKSCYKQVSAKLYSLPNPSVLVSLRLDFLRIICSHEHYVTLNLPCSLLTPPASPSPSVSSATSQSSGFSTSVQDQKIANMFELSLPFRQQHYLAGLVLTELALILDPDAEGLFGLHKKVINMVHNLLSTHDSDPRYSDPQIKARVAMLYLPLIGIIMETVPQLYDFTESHNQRGRPICIAPDDYDSESGSMISQTVAMAIAGTSVPQLTRPGSFLLTSTSGRQHTTFSAESSRSLLICLLWVLKNADETVLQKWFTDLSVLQLNRLLDLLYLCVSCFEYKGKKVFERMNSLTFKKSKDMRAKLEEAILGSIGARQEMVRRSRGQLERSPSGSAFGSQENLRWRKDMTHWRQNSEKLDKSRAEIEHEALIDGNLATEANLIILDTLEIIVQTVSVTESKESILGGVLKVLLQSMACNQSAVYLQHCFATQRALVSKFPELLFEEETEQCADLCLRLLRHCSSSISTIRSHASASLYLLMRQNFEIGNNFARVKMQVTMSLSSLVGTSQNFNEEFLRRSLKTILTYAEEDLELRETTFPDQVQDLVFNLHMILSDTVKMKEHQEDPEMLIDLMYRIAKGYQTSPDLRLTWLQNMAGKHSERSNHAEAAQCLVHSAALVAEYLSMLEDRKYLPVGCVTFQNISSNVLEESAVSDDVVSPDEEGICSGKYFTESGLVGLLEQAAASFSMAGMYEAVNEVYKVLIPIHEANRDAKKLSTIHGKLQEAFSKIVHQSTGWERMFGTYFRVGFYGTKFGDLDEQEFVYKEPAITKLAEISHRLEGFYGERFGEDVLEVIKDSNPVDKCKLDPNKAYIQITYVEPFFDTYEMKDRITYFDKNYNLRRFMYCTPFTLDGRAHGELHEQFKRKTILTTSHAFPYIKTRVNVTHKEEIILTPIEVAIEDMQKKTQELAFATHQDPADPKMLQMVLQGSVGTTVNQGPLEVAQVFLSEIPGDPKLFRHHNKLRLCFKDFTKRCEDALRKNKSLIGPDQKEYQRELERNYHRLKEALQPLINRKIPQLYKAVLPVTCHRDSFSRMSLRKMEL.

At serine 30 the chain carries Phosphoserine. Residues 137–175 (GFNPNTLDKQKERQKGLPRQVFESDEAPDGSSYQDEQDD) form a disordered region. A phosphoserine mark is found at serine 180 and serine 182. Positions 365-395 (FKEADATKNKEKLEKLKSQADQFCQRLGKYR) form a coiled coil. Lysine 381 is modified (N6-methyllysine). Residue threonine 450 is modified to Phosphothreonine. Serine 452 is subject to Phosphoserine. In terms of domain architecture, C2 DOCK-type spans 561-727 (RNLLYIYPQS…GVFNVEVVAV (167 aa)). Phosphoserine occurs at positions 862, 864, 882, 888, 896, 900, and 905. Positions 888-901 (SLNLNRSRSLSNSN) are enriched in low complexity. Residues 888-966 (SLNLNRSRSL…SCNRMSSHTE (79 aa)) are disordered. Phosphothreonine is present on residues threonine 907 and threonine 909. A phosphoserine mark is found at serine 910, serine 929, serine 963, serine 1382, serine 1420, serine 1422, serine 1424, and serine 1428. The segment covering 942–966 (SNPSPSAESTQAMDRSCNRMSSHTE) has biased composition (polar residues). The region spanning 1668-2104 (KGYQTSPDLR…LQPLINRKIP (437 aa)) is the DOCKER domain. Lysine 1952 carries the post-translational modification N6-acetyllysine. A coiled-coil region spans residues 2076 to 2102 (DQKEYQRELERNYHRLKEALQPLINRK). Position 2119 is a phosphoserine (serine 2119).

It belongs to the DOCK family. In terms of assembly, component of the DOCK7-induced septin displacement/DISP complex, at least composed of DOCK7, LRCH3 and MYO6. Interacts with TSC1. Interacts with nucleotide-free RAC1 and RAC3. Interacts with TACC3. Interacts with CRY1. Interacts with NOD2.

Its subcellular location is the cell projection. The protein resides in the axon. In terms of biological role, functions as a guanine nucleotide exchange factor (GEF), which activates Rac1 and Rac3 Rho small GTPases by exchanging bound GDP for free GTP. Does not have a GEF activity for CDC42. Required for STMN1 'Ser-15' phosphorylation during axon formation and consequently for neuronal polarization. As part of the DISP complex, may regulate the association of septins with actin and thereby regulate the actin cytoskeleton. Has a role in pigmentation. Involved in the regulation of cortical neurogenesis through the control of radial glial cells (RGCs) proliferation versus differentiation; negatively regulates the basal-to-apical interkinetic nuclear migration of RGCs by antagonizing the microtubule growth-promoting function of TACC3. The chain is Dedicator of cytokinesis protein 7 (Dock7) from Mus musculus (Mouse).